We begin with the raw amino-acid sequence, 155 residues long: Glutamyl-tRNA(Gln) amidotransferase subunit C, chloroplastic/mitochondrial (155 aa).

The transit peptide at 1 to 52 directs the protein to the chloroplast and mitochondrion; the sequence is MATRALLAVIYASPNRCYISPSRIKIQSLTCSSSSHYYQRQSRKNHRIARSY.

The protein belongs to the GatC family. Subunit of the heterotrimeric GatCAB amidotransferase (AdT) complex, composed of A, B and C subunits.

The protein resides in the mitochondrion. It localises to the plastid. The protein localises to the chloroplast. It catalyses the reaction L-glutamyl-tRNA(Gln) + L-glutamine + ATP + H2O = L-glutaminyl-tRNA(Gln) + L-glutamate + ADP + phosphate + H(+). In terms of biological role, allows the formation of correctly charged Gln-tRNA(Gln) through the transamidation of misacylated Glu-tRNA(Gln) in chloroplasts and mitochondria. The reaction takes place in the presence of glutamine and ATP through an activated gamma-phospho-Glu-tRNA(Gln). This Arabidopsis thaliana (Mouse-ear cress) protein is Glutamyl-tRNA(Gln) amidotransferase subunit C, chloroplastic/mitochondrial.